We begin with the raw amino-acid sequence, 491 residues long: Glutamyl-tRNA(Gln) amidotransferase subunit A (491 aa).

Catalysis depends on charge relay system residues lysine 80 and serine 155. Catalysis depends on serine 179, which acts as the Acyl-ester intermediate.

The protein belongs to the amidase family. GatA subfamily. Heterotrimer of A, B and C subunits.

It catalyses the reaction L-glutamyl-tRNA(Gln) + L-glutamine + ATP + H2O = L-glutaminyl-tRNA(Gln) + L-glutamate + ADP + phosphate + H(+). Functionally, allows the formation of correctly charged Gln-tRNA(Gln) through the transamidation of misacylated Glu-tRNA(Gln) in organisms which lack glutaminyl-tRNA synthetase. The reaction takes place in the presence of glutamine and ATP through an activated gamma-phospho-Glu-tRNA(Gln). This chain is Glutamyl-tRNA(Gln) amidotransferase subunit A, found in Salinispora arenicola (strain CNS-205).